The primary structure comprises 39 residues: TFINVKCTSPKQCLKPCKDLYGPHAGEKCMNGKCKCYKV.

3 cysteine pairs are disulfide-bonded: cysteine 7–cysteine 29, cysteine 13–cysteine 34, and cysteine 17–cysteine 36.

This sequence belongs to the short scorpion toxin superfamily. Potassium channel inhibitor family. Alpha-KTx 02 subfamily. In terms of tissue distribution, expressed by the venom gland.

Its subcellular location is the secreted. Its function is as follows. Blocks human voltage-gated potassium (Kv) channels Kv1.1/KCNA, Kv1.2/KCNA2 and Kv1.3/KCNA3. Exhibits high affinity for Kv1.2/KCNA2 and selectivity over Kv1.1/KCNA and Kv1.3/KCNA3. The polypeptide is Potassium channel toxin alpha-KTx 2.24 (Centruroides bonito (Scorpion)).